The chain runs to 358 residues: Peptide chain release factor 1 (358 aa).

Glutamine 234 is modified (N5-methylglutamine). The segment at 283-306 (ERLHSERAGQRKSMVGSGDRSERI) is disordered.

Belongs to the prokaryotic/mitochondrial release factor family. Methylated by PrmC. Methylation increases the termination efficiency of RF1.

The protein resides in the cytoplasm. Its function is as follows. Peptide chain release factor 1 directs the termination of translation in response to the peptide chain termination codons UAG and UAA. This Zymomonas mobilis subsp. mobilis (strain ATCC 31821 / ZM4 / CP4) protein is Peptide chain release factor 1.